Consider the following 526-residue polypeptide: Peptide chain release factor 3 (526 aa).

Positions 11-277 (SKRRTFAIIS…SLIKWAPSPL (267 aa)) constitute a tr-type G domain. Residues 20-27 (SHPDAGKT), 88-92 (DTPGH), and 142-145 (NKLD) contribute to the GTP site.

It belongs to the TRAFAC class translation factor GTPase superfamily. Classic translation factor GTPase family. PrfC subfamily.

The protein resides in the cytoplasm. Increases the formation of ribosomal termination complexes and stimulates activities of RF-1 and RF-2. It binds guanine nucleotides and has strong preference for UGA stop codons. It may interact directly with the ribosome. The stimulation of RF-1 and RF-2 is significantly reduced by GTP and GDP, but not by GMP. The protein is Peptide chain release factor 3 of Buchnera aphidicola subsp. Acyrthosiphon pisum (strain Tuc7).